The chain runs to 308 residues: MAEENHTMKNEFILTGFTDHPELKTLLFVVFFAIYLITVVGNISLVALIFTHRRLHTPMYIFLGNLALVDSCCACAITPKMLENFFSENKRISLYECAVQFYFLCTVETADCFLLAAMAYDRYVAICNPLQYHIMMSKKLCIQMTTGAFIAGNLHSMIHVGLVFRLVFCGSNHINHFYCDILPLYRLSCVDPYINELVLFIFSGSVQVFTIGSVLISYLYILLTIFKMKSKEGRAKAFSTCASHFLSVSLFYGSLFFMYVRPNLLEEGDKDIPAAILFTIVVPLLNPFIYSLRNREVISVLRKILMKK.

Over 1–25 the chain is Extracellular; the sequence is MAEENHTMKNEFILTGFTDHPELKT. Residue N5 is glycosylated (N-linked (GlcNAc...) asparagine). Residues 26 to 46 form a helical membrane-spanning segment; that stretch reads LLFVVFFAIYLITVVGNISLV. At 47–54 the chain is on the cytoplasmic side; it reads ALIFTHRR. Residues 55 to 75 form a helical membrane-spanning segment; it reads LHTPMYIFLGNLALVDSCCAC. At 76-99 the chain is on the extracellular side; sequence AITPKMLENFFSENKRISLYECAV. The cysteines at positions 97 and 189 are disulfide-linked. Residues 100–120 traverse the membrane as a helical segment; sequence QFYFLCTVETADCFLLAAMAY. The Cytoplasmic portion of the chain corresponds to 121–139; that stretch reads DRYVAICNPLQYHIMMSKK. The helical transmembrane segment at 140-160 threads the bilayer; that stretch reads LCIQMTTGAFIAGNLHSMIHV. Over 161 to 196 the chain is Extracellular; it reads GLVFRLVFCGSNHINHFYCDILPLYRLSCVDPYINE. The helical transmembrane segment at 197–217 threads the bilayer; sequence LVLFIFSGSVQVFTIGSVLIS. Over 218 to 237 the chain is Cytoplasmic; the sequence is YLYILLTIFKMKSKEGRAKA. Residues 238–258 form a helical membrane-spanning segment; that stretch reads FSTCASHFLSVSLFYGSLFFM. Residues 259 to 271 are Extracellular-facing; that stretch reads YVRPNLLEEGDKD. Residues 272–292 form a helical membrane-spanning segment; that stretch reads IPAAILFTIVVPLLNPFIYSL. The Cytoplasmic segment spans residues 293–308; that stretch reads RNREVISVLRKILMKK.

It belongs to the G-protein coupled receptor 1 family.

It localises to the cell membrane. Its function is as follows. Odorant receptor. The sequence is that of Olfactory receptor 5K1 (OR5K1) from Homo sapiens (Human).